The chain runs to 180 residues: ATP synthase subunit delta (180 aa).

The protein belongs to the ATPase delta chain family. F-type ATPases have 2 components, F(1) - the catalytic core - and F(0) - the membrane proton channel. F(1) has five subunits: alpha(3), beta(3), gamma(1), delta(1), epsilon(1). CF(0) has four main subunits: a(1), b(1), b'(1) and c(10-14). The alpha and beta chains form an alternating ring which encloses part of the gamma chain. F(1) is attached to F(0) by a central stalk formed by the gamma and epsilon chains, while a peripheral stalk is formed by the delta, b and b' chains.

Its subcellular location is the cellular thylakoid membrane. In terms of biological role, f(1)F(0) ATP synthase produces ATP from ADP in the presence of a proton or sodium gradient. F-type ATPases consist of two structural domains, F(1) containing the extramembraneous catalytic core and F(0) containing the membrane proton channel, linked together by a central stalk and a peripheral stalk. During catalysis, ATP synthesis in the catalytic domain of F(1) is coupled via a rotary mechanism of the central stalk subunits to proton translocation. Its function is as follows. This protein is part of the stalk that links CF(0) to CF(1). It either transmits conformational changes from CF(0) to CF(1) or is implicated in proton conduction. This chain is ATP synthase subunit delta, found in Synechococcus elongatus (strain ATCC 33912 / PCC 7942 / FACHB-805) (Anacystis nidulans R2).